A 666-amino-acid polypeptide reads, in one-letter code: Probable potassium transport system protein Kup (666 aa).

Transmembrane regions (helical) follow at residues 16–36 (GFII…LYTM), 58–78 (ISLI…LIAL), 100–120 (PWLI…GALT), 141–161 (IYQN…VLFG), 165–185 (FGTG…FSFL), 221–241 (IFIL…YSDL), 253–273 (WPFV…WILA), 292–312 (LTVY…QALI), 343–363 (LYIP…VLYF), 373–393 (YGLA…YYLI), 399–419 (PFLA…FFWA), and 424–444 (FMHG…VMFI).

It belongs to the HAK/KUP transporter (TC 2.A.72) family.

It localises to the cell membrane. It catalyses the reaction K(+)(in) + H(+)(in) = K(+)(out) + H(+)(out). Transport of potassium into the cell. Likely operates as a K(+):H(+) symporter. The protein is Probable potassium transport system protein Kup of Streptococcus pyogenes serotype M18 (strain MGAS8232).